A 494-amino-acid chain; its full sequence is Glutamate--tRNA ligase (494 aa).

The 'HIGH' region signature appears at 10–20 (PSPTGDPHVGT). Cysteine 107, cysteine 109, cysteine 134, and histidine 136 together coordinate Zn(2+). The 'KMSKS' region signature appears at 251–255 (KLSKR). An ATP-binding site is contributed by lysine 254.

Belongs to the class-I aminoacyl-tRNA synthetase family. Glutamate--tRNA ligase type 1 subfamily. In terms of assembly, monomer. Requires Zn(2+) as cofactor.

It localises to the cytoplasm. It carries out the reaction tRNA(Glu) + L-glutamate + ATP = L-glutamyl-tRNA(Glu) + AMP + diphosphate. Catalyzes the attachment of glutamate to tRNA(Glu) in a two-step reaction: glutamate is first activated by ATP to form Glu-AMP and then transferred to the acceptor end of tRNA(Glu). The sequence is that of Glutamate--tRNA ligase from Pseudomonas aeruginosa (strain UCBPP-PA14).